The sequence spans 506 residues: Allantoinase (506 aa).

Residues H105, H107, K195, H231, H292, and D366 each coordinate Zn(2+). Residue K195 is modified to N6-carboxylysine.

Belongs to the metallo-dependent hydrolases superfamily. Allantoinase family. As to quaternary structure, homotetramer. It depends on Zn(2+) as a cofactor. In terms of processing, carboxylation allows a single lysine to coordinate two zinc ions.

The catalysed reaction is (S)-allantoin + H2O = allantoate + H(+). Its pathway is nitrogen metabolism; (S)-allantoin degradation; allantoate from (S)-allantoin: step 1/1. Catalyzes the conversion of allantoin (5-ureidohydantoin) to allantoate by hydrolytic cleavage of the five-member hydantoin ring. Catalyzes the first step of the ureide allantoin degradation followed by the sequential activity of AAH, UGLYAH and UAH which allows a complete purine breakdown without the intermediate generation of urea. The chain is Allantoinase (ALN) from Arabidopsis thaliana (Mouse-ear cress).